Reading from the N-terminus, the 961-residue chain is Glycine dehydrogenase (decarboxylating) (961 aa).

Lysine 709 is modified (N6-(pyridoxal phosphate)lysine).

This sequence belongs to the GcvP family. The glycine cleavage system is composed of four proteins: P, T, L and H. Requires pyridoxal 5'-phosphate as cofactor.

It carries out the reaction N(6)-[(R)-lipoyl]-L-lysyl-[glycine-cleavage complex H protein] + glycine + H(+) = N(6)-[(R)-S(8)-aminomethyldihydrolipoyl]-L-lysyl-[glycine-cleavage complex H protein] + CO2. The glycine cleavage system catalyzes the degradation of glycine. The P protein binds the alpha-amino group of glycine through its pyridoxal phosphate cofactor; CO(2) is released and the remaining methylamine moiety is then transferred to the lipoamide cofactor of the H protein. The polypeptide is Glycine dehydrogenase (decarboxylating) (Teredinibacter turnerae (strain ATCC 39867 / T7901)).